The primary structure comprises 606 residues: Aspartate--tRNA(Asp/Asn) ligase (606 aa).

Position 196 (glutamate 196) interacts with L-aspartate. The segment at 220 to 223 (QIFK) is aspartate. Arginine 242 provides a ligand contact to L-aspartate. Residues 242–244 (RDE) and glutamine 251 each bind ATP. Histidine 465 contributes to the L-aspartate binding site. Glutamate 499 provides a ligand contact to ATP. Position 506 (arginine 506) interacts with L-aspartate. 551–554 (GMDR) is an ATP binding site.

Belongs to the class-II aminoacyl-tRNA synthetase family. Type 1 subfamily. In terms of assembly, homodimer.

The protein localises to the cytoplasm. The catalysed reaction is tRNA(Asx) + L-aspartate + ATP = L-aspartyl-tRNA(Asx) + AMP + diphosphate. In terms of biological role, aspartyl-tRNA synthetase with relaxed tRNA specificity since it is able to aspartylate not only its cognate tRNA(Asp) but also tRNA(Asn). Reaction proceeds in two steps: L-aspartate is first activated by ATP to form Asp-AMP and then transferred to the acceptor end of tRNA(Asp/Asn). The polypeptide is Aspartate--tRNA(Asp/Asn) ligase (Oleidesulfovibrio alaskensis (strain ATCC BAA-1058 / DSM 17464 / G20) (Desulfovibrio alaskensis)).